We begin with the raw amino-acid sequence, 234 residues long: Glutamine synthetase (234 aa).

Residues 1–234 form the GS catalytic domain; that stretch reads KAQEPWFGIE…TRLLVETTLL (234 aa). The interval 126-157 is disordered; that stretch reads GSGGHVNFSNRQPESPPAGKQSRSSAKKLGKR.

This sequence belongs to the glutamine synthetase family. In terms of assembly, homooctamer.

It localises to the cytoplasm. The catalysed reaction is L-glutamate + NH4(+) + ATP = L-glutamine + ADP + phosphate + H(+). The polypeptide is Glutamine synthetase (Dunaliella salina (Green alga)).